The primary structure comprises 82 residues: Sulfur carrier protein TusA (82 aa).

The Cysteine persulfide intermediate role is filled by cysteine 17.

Belongs to the sulfur carrier protein TusA family.

The protein resides in the cytoplasm. Sulfur carrier protein which probably makes part of a sulfur-relay system. This chain is Sulfur carrier protein TusA, found in Glaesserella parasuis serovar 5 (strain SH0165) (Haemophilus parasuis).